Reading from the N-terminus, the 277-residue chain is Large ribosomal subunit protein uL2 (277 aa).

Residues 222–277 form a disordered region; it reads GSVMNPNDHPHGGGEGKAPVGRKAPSTPWGKPALGLKTRNKKAKSDKLIVRRRNEK. Positions 264–277 are enriched in basic and acidic residues; the sequence is AKSDKLIVRRRNEK.

It belongs to the universal ribosomal protein uL2 family. In terms of assembly, part of the 50S ribosomal subunit. Forms a bridge to the 30S subunit in the 70S ribosome.

Functionally, one of the primary rRNA binding proteins. Required for association of the 30S and 50S subunits to form the 70S ribosome, for tRNA binding and peptide bond formation. It has been suggested to have peptidyltransferase activity; this is somewhat controversial. Makes several contacts with the 16S rRNA in the 70S ribosome. This is Large ribosomal subunit protein uL2 from Streptococcus thermophilus (strain CNRZ 1066).